Consider the following 219-residue polypeptide: Inner membrane protein YghB (219 aa).

Residues 1 to 17 are Cytoplasmic-facing; sequence MAVIQDIIAALWQHDFA. Residues 18–38 form a helical membrane-spanning segment; it reads ALADPHIVSVVYFVMFATLFL. Residues 39-67 lie on the Periplasmic side of the membrane; that stretch reads ENGLLPASFLPGDSLLILAGALIAQGVMD. Residues 68 to 88 traverse the membrane as a helical segment; that stretch reads FLPTIAILTAAASLGCWLSYI. Residues 89–160 lie on the Cytoplasmic side of the membrane; sequence QGRWLGNTKT…RRFQFFNWLS (72 aa). The helical transmembrane segment at 161–181 threads the bilayer; that stretch reads GLLWVSVVTSFGYALSMIPFV. The Periplasmic segment spans residues 182–191; the sequence is KRHEDQVMTF. The helical transmembrane segment at 192 to 212 threads the bilayer; the sequence is LMILPIALLTAGLLGTLFVVI. Residues 213–219 lie on the Cytoplasmic side of the membrane; the sequence is KKKYCNA.

This sequence belongs to the DedA family.

The protein localises to the cell inner membrane. The polypeptide is Inner membrane protein YghB (yghB) (Escherichia coli O6:H1 (strain CFT073 / ATCC 700928 / UPEC)).